The primary structure comprises 150 residues: Large ribosomal subunit protein uL13 (150 aa).

Positions 130–150 (EHPHGAQQPQPYQLNPSASIK) are disordered. Over residues 136-150 (QQPQPYQLNPSASIK) the composition is skewed to polar residues.

This sequence belongs to the universal ribosomal protein uL13 family. Part of the 50S ribosomal subunit.

Functionally, this protein is one of the early assembly proteins of the 50S ribosomal subunit, although it is not seen to bind rRNA by itself. It is important during the early stages of 50S assembly. This is Large ribosomal subunit protein uL13 from Synechococcus sp. (strain RCC307).